The primary structure comprises 295 residues: 4-hydroxy-tetrahydrodipicolinate synthase (295 aa).

T46 serves as a coordination point for pyruvate. The active-site Proton donor/acceptor is Y135. K164 (schiff-base intermediate with substrate) is an active-site residue. I205 lines the pyruvate pocket.

It belongs to the DapA family. As to quaternary structure, homotetramer; dimer of dimers.

Its subcellular location is the cytoplasm. It catalyses the reaction L-aspartate 4-semialdehyde + pyruvate = (2S,4S)-4-hydroxy-2,3,4,5-tetrahydrodipicolinate + H2O + H(+). The protein operates within amino-acid biosynthesis; L-lysine biosynthesis via DAP pathway; (S)-tetrahydrodipicolinate from L-aspartate: step 3/4. In terms of biological role, catalyzes the condensation of (S)-aspartate-beta-semialdehyde [(S)-ASA] and pyruvate to 4-hydroxy-tetrahydrodipicolinate (HTPA). This is 4-hydroxy-tetrahydrodipicolinate synthase from Aliarcobacter butzleri (strain RM4018) (Arcobacter butzleri).